The following is a 101-amino-acid chain: ATP-dependent Clp protease adapter protein ClpS (101 aa).

The tract at residues 1–24 (MVVASAPAKPGSVGQQESASRDAT) is disordered. The segment covering 13–23 (VGQQESASRDA) has biased composition (polar residues).

Belongs to the ClpS family. As to quaternary structure, binds to the N-terminal domain of the chaperone ClpA.

Functionally, involved in the modulation of the specificity of the ClpAP-mediated ATP-dependent protein degradation. This is ATP-dependent Clp protease adapter protein ClpS from Mycobacterium marinum (strain ATCC BAA-535 / M).